A 156-amino-acid polypeptide reads, in one-letter code: ATP synthase subunit b (156 aa).

The helical transmembrane segment at 7–29 threads the bilayer; sequence LLGQAISFGMFVWFCMKYVWPPI.

It belongs to the ATPase B chain family. In terms of assembly, F-type ATPases have 2 components, F(1) - the catalytic core - and F(0) - the membrane proton channel. F(1) has five subunits: alpha(3), beta(3), gamma(1), delta(1), epsilon(1). F(0) has three main subunits: a(1), b(2) and c(10-14). The alpha and beta chains form an alternating ring which encloses part of the gamma chain. F(1) is attached to F(0) by a central stalk formed by the gamma and epsilon chains, while a peripheral stalk is formed by the delta and b chains.

The protein localises to the cell inner membrane. Functionally, f(1)F(0) ATP synthase produces ATP from ADP in the presence of a proton or sodium gradient. F-type ATPases consist of two structural domains, F(1) containing the extramembraneous catalytic core and F(0) containing the membrane proton channel, linked together by a central stalk and a peripheral stalk. During catalysis, ATP synthesis in the catalytic domain of F(1) is coupled via a rotary mechanism of the central stalk subunits to proton translocation. Component of the F(0) channel, it forms part of the peripheral stalk, linking F(1) to F(0). The polypeptide is ATP synthase subunit b (Vibrio cholerae serotype O1 (strain ATCC 39541 / Classical Ogawa 395 / O395)).